The primary structure comprises 281 residues: MARTGRRAAVGRPARTSSLTERRRVLLAGVRSHTRFYKAFAREVREFNATRICGTLLTLMSGSLQGRSLFEATRVTLICEVDLGPRRPDCICVFEFANDKTLGGVCVILELKTCKSISSGDTASKREQRTTGMKQLRHSLKLLQSLAPPGDKVVYLCPILVFVAQRTLRVSRVTRLVPQKISGNITAAVRMLQSLSTYAVPPEPQTRRSRRRVAATARPQRPPSPTRDPEGTAGHPAPPESDPPSPGVVGVAAEGGGVLQKIAALFCVPVAAKSRPRTKTE.

The tract at residues 199–252 (AVPPEPQTRRSRRRVAATARPQRPPSPTRDPEGTAGHPAPPESDPPSPGVVGVA) is disordered. The segment covering 236 to 246 (PAPPESDPPSP) has biased composition (pro residues).

This sequence belongs to the herpesviridae UL24 family.

It is found in the virion. Its subcellular location is the host cytoplasm. It localises to the host nucleus. The protein localises to the host nucleolus. The protein resides in the host Golgi apparatus. In terms of biological role, may participate in nuclear egress of viral particles. Plays a role in the dispersal of several host nucleolar proteins including NCL/nucleolin and NPM1. Since deletion of host NCL/nucleolin negatively impact on nuclear egress, UL24 supposedly acts on this process through its effect on host nucleoli. The chain is Protein UL24 from Human herpesvirus 2 (strain HG52) (HHV-2).